Consider the following 514-residue polypeptide: MVVPFKNEPGIDFSVQENVERFQKTLEQVKNELGQTLPIVIDGEHITKDDTFDSINPANTSELIAKVSKATKEDVDKAFESSNKAYKAWRQWSHKDRAELLLRVAAIIRRRKEEISAVMVYEAGKPWDEAVGDAAEGIDFIEYYARSMMELADGKPVLDREGEHNKYFYKSIGTGVTIPPWNFPFAIMAGTTLAPVVAGNTVLLKPAEDTVLTAYKLIEILEEAGLPKGVVNFVPGDPKEIGDYLVDSVHTHFVTFTGSRATGTRIYERSAVVQEGQTFLKRVIAEMGGKDAIVVDENIDTDLAAESIITSAFGFSGQKCSACSRAIVHSSVYDEVLEKAVALTKELTVGNTVDNTFMGPVINKKQFDKIKKYIEIGGKEGKIEIGGEADDSTGYFIKPTIISGLKSSDQVMQEEIFGPVVGFTKFDNFEEAIEIANDTDYGLTGAVITNNRENWIKAVNEFDVGNLYLNRGCTAAVVGYHPFGGFKMSGTDAKTGSPDYLLNFLEQKVVSEMF.

Active-site residues include Glu286 and Cys320.

Belongs to the aldehyde dehydrogenase family. RocA subfamily.

It carries out the reaction L-glutamate 5-semialdehyde + NAD(+) + H2O = L-glutamate + NADH + 2 H(+). Its pathway is amino-acid degradation; L-proline degradation into L-glutamate; L-glutamate from L-proline: step 2/2. The chain is 1-pyrroline-5-carboxylate dehydrogenase from Staphylococcus haemolyticus (strain JCSC1435).